The following is a 619-amino-acid chain: Guanylate cyclase soluble subunit beta-1 (619 aa).

Residue H105 participates in heme binding. Residues 421 to 554 (TILFSGIVGF…NTVNLTSRTE (134 aa)) form the Guanylate cyclase domain.

This sequence belongs to the adenylyl cyclase class-4/guanylyl cyclase family. As to quaternary structure, the active enzyme is formed by a heterodimer of an alpha and a beta subunit. Heterodimer with GUCY1A1. Can also form inactive homodimers in vitro. Requires heme as cofactor. Detected in brain cortex and cerebellum (at protein level).

The protein resides in the cytoplasm. It catalyses the reaction GTP = 3',5'-cyclic GMP + diphosphate. Activated by nitric oxide in the presence of magnesium or manganese ions. Functionally, mediates responses to nitric oxide (NO) by catalyzing the biosynthesis of the signaling molecule cGMP. The sequence is that of Guanylate cyclase soluble subunit beta-1 from Homo sapiens (Human).